A 1401-amino-acid chain; its full sequence is MAP kinase kinase kinase wis4 (1401 aa).

Disordered stretches follow at residues 67–99 and 176–205; these read HIPLTPSHSGQSEKLMSTRTSHSPYISPTMSYT and QDSISDKSLPSTNQSLHHSEEDTESDNDFS. Polar residues-rich tracts occupy residues 72–99 and 176–191; these read PSHSGQSEKLMSTRTSHSPYISPTMSYT and QDSISDKSLPSTNQSL. One can recognise a Protein kinase domain in the interval 1037-1306; it reads WQQGHFVRSG…AVDLLTHPWI (270 aa). ATP contacts are provided by residues 1043–1051 and K1066; that span reads VRSGMFGDV. D1161 functions as the Proton acceptor in the catalytic mechanism.

The protein belongs to the protein kinase superfamily. STE Ser/Thr protein kinase family. MAP kinase kinase kinase subfamily.

The enzyme catalyses L-seryl-[protein] + ATP = O-phospho-L-seryl-[protein] + ADP + H(+). It carries out the reaction L-threonyl-[protein] + ATP = O-phospho-L-threonyl-[protein] + ADP + H(+). In terms of biological role, involved in a signal transduction pathway that is activated in under conditions of heat shock, oxidative stress or limited nutrition. Unlike win1, it is not activated by changes in the osmolarity of the extracellular environment. Activates the wis1 MAP kinase kinase by phosphorylation. The polypeptide is MAP kinase kinase kinase wis4 (wis4) (Schizosaccharomyces pombe (strain 972 / ATCC 24843) (Fission yeast)).